We begin with the raw amino-acid sequence, 108 residues long: Ig kappa chain V region GOM (108 aa).

Positions 1 to 23 (DIVMTQTPLSLSVSPGEPASISC) are framework-1. An intrachain disulfide couples Cys-23 to Cys-88. The interval 24-34 (RSSQSNLDYLN) is complementarity-determining-1. Residues 35–49 (WYLQKAGQSPRLLPE) form a framework-2 region. Residues 44-66 (PRLLPEQDSQRASGVPDRFSGSG) are disordered. Positions 50 to 56 (QDSQRAS) are complementarity-determining-2. The tract at residues 57–88 (GVPDRFSGSGSGTDFTLRIGRVEAEDAGIYYC) is framework-3. Residues 89–97 (MQRSFYPYT) are complementarity-determining-3. Residues 98 to 107 (FGQGTRLEVR) form a framework-4 region.

The sequence is that of Ig kappa chain V region GOM from Canis lupus familiaris (Dog).